We begin with the raw amino-acid sequence, 664 residues long: Macoilin (664 aa).

A run of 4 helical transmembrane segments spans residues Thr-28 to Leu-48, Ala-75 to Ile-95, Val-120 to Phe-140, and Phe-154 to Val-174. The span at Tyr-252–Lys-265 shows a compositional bias: basic and acidic residues. The tract at residues Tyr-252 to Asn-274 is disordered. Ser-305 is subject to Phosphoserine. The segment covering Lys-320–Ser-348 has biased composition (polar residues). Positions Lys-320–Asn-375 are disordered. N-linked (GlcNAc...) asparagine glycosylation is present at Asn-324. Ser-332 is subject to Phosphoserine. N-linked (GlcNAc...) asparagine glycosylation is found at Asn-340 and Asn-452. The segment at Thr-630–Lys-664 is disordered. Residues Ser-631 and Ser-634 each carry the phosphoserine modification. Asn-655 carries N-linked (GlcNAc...) asparagine glycosylation.

This sequence belongs to the macoilin family.

It is found in the rough endoplasmic reticulum membrane. The protein resides in the nucleus membrane. In terms of biological role, plays a role in the regulation of neuronal activity. The polypeptide is Macoilin (Rattus norvegicus (Rat)).